The chain runs to 643 residues: Hepatoma-derived growth factor-related protein 2 (643 aa).

One can recognise a PWWP domain in the interval 7-64 (PGDLVFAKMKGYPHWPARIDDVKDGAVKPPPNKYPIFFYGTHETAFLAPKDLFPYEKC). Disordered regions lie at residues 88-450 (PQAS…KKPE) and 548-643 (LESQ…NQTS). A compositionally biased stretch (low complexity) spans 90–104 (ASYSLPPASVSSSDS). Over residues 107 to 116 (PEEKSTARSD) the composition is skewed to basic and acidic residues. The segment covering 176–187 (SEEENSDSDQDF) has biased composition (acidic residues). Polar residues predominate over residues 194–204 (PRIQRRTTNLG). Residues 209–231 (IFAESDSKSDESEDEKKEEEQKK) are compositionally biased toward basic and acidic residues. Over residues 232–249 (SPSSSSASSPSLSSSDSE) the composition is skewed to low complexity. 3 stretches are compositionally biased toward basic and acidic residues: residues 290–353 (SVDR…DSSK), 373–382 (EDKKPVKEVK), and 417–450 (RPSE…KKPE). The stretch at 295 to 345 (SEWKKRDEERRRELEERRKKEQEEQLRRLREEEREEEERKKREKAEKGDKS) forms a coiled coil. A compositionally biased stretch (polar residues) spans 549 to 559 (ESQQKTVQKVN). Composition is skewed to basic and acidic residues over residues 560–575 (TAEK…GKVE) and 608–622 (NKTE…HAEH).

Belongs to the HDGF family.

Its subcellular location is the nucleus. The protein resides in the cytoplasm. Functionally, may act as a regulator of myogenesis. Promotes the repair of DNA double-strand breaks (DSBs) through the homologous recombination pathway by facilitating the recruitment of the DNA endonuclease RBBP8 to the DSBs. In Xenopus tropicalis (Western clawed frog), this protein is Hepatoma-derived growth factor-related protein 2 (hdgfl2).